The chain runs to 379 residues: MKCAYFDANQCLSCRHLKTPLSDQVAAKTATLAALLKDLSVEQWLPPVVGPESGFRNKAKMVVLGAAHQPILGLVSPSGEAVSLCDCSLYPQDMQQLLHRLEAFVRQAGIPPYRVDKAKGELKFILLTRSQVRGEYMLRFVMRSEQAIPRIERELPRLLAEHPEIKVVSVNLQPVHMAILEGEEEIFLTEATRLEEEFNGVPLYIRPKSFFQTHPEVAAKLYLSARKWTRELAPTSIWDLFCGVGGFGLHCASKEVALTGIEIEAEAIACAKMSAETLGLDKVRFTALDSTSFASDSRGEEKPELIIVNPPRRGIGEALCHSLSEFAPKAILYSSCNPKTLAKDLHCISGYRVTKVQLFDMFPHTDHFEVLVMLQRIGE.

[4Fe-4S] cluster-binding residues include cysteine 3, cysteine 11, cysteine 14, and cysteine 87. Residues glutamine 212, phenylalanine 241, glutamate 262, and asparagine 309 each coordinate S-adenosyl-L-methionine. Cysteine 336 (nucleophile) is an active-site residue.

The protein belongs to the class I-like SAM-binding methyltransferase superfamily. RNA M5U methyltransferase family. RlmC subfamily.

The enzyme catalyses uridine(747) in 23S rRNA + S-adenosyl-L-methionine = 5-methyluridine(747) in 23S rRNA + S-adenosyl-L-homocysteine + H(+). Functionally, catalyzes the formation of 5-methyl-uridine at position 747 (m5U747) in 23S rRNA. This Shewanella loihica (strain ATCC BAA-1088 / PV-4) protein is 23S rRNA (uracil(747)-C(5))-methyltransferase RlmC.